A 66-amino-acid chain; its full sequence is uncharacterized protein (66 aa).

This is an uncharacterized protein from Human cytomegalovirus (strain AD169) (HHV-5).